The primary structure comprises 89 residues: Small ribosomal subunit protein uS19 (89 aa).

It belongs to the universal ribosomal protein uS19 family.

In terms of biological role, protein S19 forms a complex with S13 that binds strongly to the 16S ribosomal RNA. This chain is Small ribosomal subunit protein uS19, found in Brachyspira hyodysenteriae (strain ATCC 49526 / WA1).